A 384-amino-acid chain; its full sequence is Putative glutamate--cysteine ligase 2 (384 aa).

It belongs to the glutamate--cysteine ligase type 2 family. YbdK subfamily.

The catalysed reaction is L-cysteine + L-glutamate + ATP = gamma-L-glutamyl-L-cysteine + ADP + phosphate + H(+). ATP-dependent carboxylate-amine ligase which exhibits weak glutamate--cysteine ligase activity. The sequence is that of Putative glutamate--cysteine ligase 2 from Ruegeria pomeroyi (strain ATCC 700808 / DSM 15171 / DSS-3) (Silicibacter pomeroyi).